Consider the following 275-residue polypeptide: MNFTDRATRVAIIANGKYQSKRVASKLFAAFKHDPDFYLSKKDPDIVISIGGDGMLLSAFHMYEKQLDKVRFVGVHTGHLGFYTDYRDFEVDTLINNLKNDEGEQISYPILKVTITLEDGRVIRARALNESTIKRIEKTMVADVVINQVVFERFRGDGILVSTPTGSTAYNKSLGGAVLHPTIEALQLTEISSLNNRVYRTLGSSVIIPKKDAIEIVPKRVGVYTISIDNKTVHYKNVTKIEYSIDEKSINFVSTPSHTSFWERVNDAFIGEPEH.

Residue D53 is the Proton acceptor of the active site. NAD(+) contacts are provided by residues 53–54 (DG), 129–130 (NE), R155, D157, and 168–173 (TAYNKS).

It belongs to the NAD kinase family. A divalent metal cation is required as a cofactor.

It is found in the cytoplasm. The catalysed reaction is NAD(+) + ATP = ADP + NADP(+) + H(+). In terms of biological role, involved in the regulation of the intracellular balance of NAD and NADP, and is a key enzyme in the biosynthesis of NADP. Catalyzes specifically the phosphorylation on 2'-hydroxyl of the adenosine moiety of NAD to yield NADP. The chain is NAD kinase from Streptococcus agalactiae serotype Ia (strain ATCC 27591 / A909 / CDC SS700).